We begin with the raw amino-acid sequence, 474 residues long: ATP synthase subunit beta 2 (474 aa).

157-164 (GGAGVGKT) lines the ATP pocket.

This sequence belongs to the ATPase alpha/beta chains family. As to quaternary structure, F-type ATPases have 2 components, CF(1) - the catalytic core - and CF(0) - the membrane proton channel. CF(1) has five subunits: alpha(3), beta(3), gamma(1), delta(1), epsilon(1). CF(0) has three main subunits: a(1), b(2) and c(9-12). The alpha and beta chains form an alternating ring which encloses part of the gamma chain. CF(1) is attached to CF(0) by a central stalk formed by the gamma and epsilon chains, while a peripheral stalk is formed by the delta and b chains.

Its subcellular location is the cell inner membrane. It carries out the reaction ATP + H2O + 4 H(+)(in) = ADP + phosphate + 5 H(+)(out). Produces ATP from ADP in the presence of a proton gradient across the membrane. The catalytic sites are hosted primarily by the beta subunits. The chain is ATP synthase subunit beta 2 from Polaromonas naphthalenivorans (strain CJ2).